A 178-amino-acid chain; its full sequence is Large ribosomal subunit protein uL6 (178 aa).

This sequence belongs to the universal ribosomal protein uL6 family. As to quaternary structure, part of the 50S ribosomal subunit.

This protein binds to the 23S rRNA, and is important in its secondary structure. It is located near the subunit interface in the base of the L7/L12 stalk, and near the tRNA binding site of the peptidyltransferase center. This Campylobacter jejuni subsp. jejuni serotype O:2 (strain ATCC 700819 / NCTC 11168) protein is Large ribosomal subunit protein uL6.